Reading from the N-terminus, the 104-residue chain is Integration host factor subunit alpha (104 aa).

This sequence belongs to the bacterial histone-like protein family. As to quaternary structure, heterodimer of an alpha and a beta chain.

This protein is one of the two subunits of integration host factor, a specific DNA-binding protein that functions in genetic recombination as well as in transcriptional and translational control. The polypeptide is Integration host factor subunit alpha (Methylobacterium sp. (strain 4-46)).